We begin with the raw amino-acid sequence, 433 residues long: uncharacterized protein (433 aa).

Positions 61–178 (RFNHSLGVYE…QIDADRMDYL (118 aa)) constitute an HD domain.

This is an uncharacterized protein from Bacillus subtilis (strain 168).